Consider the following 436-residue polypeptide: UPF0597 protein YhaM (436 aa).

It belongs to the UPF0597 family.

The chain is UPF0597 protein YhaM from Salmonella heidelberg (strain SL476).